Reading from the N-terminus, the 302-residue chain is Recombination-associated protein RdgC (302 aa).

Belongs to the RdgC family.

The protein resides in the cytoplasm. It localises to the nucleoid. May be involved in recombination. This Tolumonas auensis (strain DSM 9187 / NBRC 110442 / TA 4) protein is Recombination-associated protein RdgC.